A 439-amino-acid polypeptide reads, in one-letter code: Branched-chain amino acid permease BrnQ (439 aa).

Residues 1–9 are Cytoplasmic-facing; that stretch reads MTHQLRSRD. A helical transmembrane segment spans residues 10–30; the sequence is IIALGFMTFALFVGAGNIIFP. The Periplasmic segment spans residues 31–45; that stretch reads PMVGLQAGEHVWTAA. The chain crosses the membrane as a helical span at residues 46-66; sequence FGFLITAVGLPVLTVVALAKV. Residues 67 to 79 are Cytoplasmic-facing; it reads GGGVDSLSTPIGK. A helical membrane pass occupies residues 80-100; it reads VAGVLLATVCYLAVGPLFATP. The Periplasmic segment spans residues 101–118; the sequence is RTATVSFEVGIAPLTGDS. The chain crosses the membrane as a helical span at residues 119–139; that stretch reads ALPLFIYSLVYFAIVILVSLY. Topologically, residues 140–149 are cytoplasmic; sequence PGKLLDTVGN. Residues 150-170 traverse the membrane as a helical segment; it reads FLAPLKIIALVILSVAAIVWP. Residues 171-189 lie on the Periplasmic side of the membrane; that stretch reads AGSISTATEAYQNAAFSNG. The chain crosses the membrane as a helical span at residues 190-210; the sequence is FVNGYLTMDTLGAMVFGIVIV. The Cytoplasmic portion of the chain corresponds to 211–226; sequence NAARSRGVTEARLLTR. The chain crosses the membrane as a helical span at residues 227–247; it reads YTVWAGLMAGVGLTLLYLALF. Residues 248 to 277 are Periplasmic-facing; that stretch reads RLGSDSASLVDQSANGAAILHAYVQHTFGG. A helical membrane pass occupies residues 278–298; it reads GGSFLLAALIFIACLVTAVGL. Topologically, residues 299–316 are cytoplasmic; that stretch reads TCACAEFFAQYVPLSYRT. Residues 317–337 traverse the membrane as a helical segment; it reads LVFILGGFSMVVSNLGLSQLI. Residue glutamine 338 is a topological domain, periplasmic. The chain crosses the membrane as a helical span at residues 339–359; that stretch reads ISVPVLTAIYPPCIALVVLSF. The Cytoplasmic segment spans residues 360-369; it reads TRSWWHNSSR. A helical transmembrane segment spans residues 370 to 390; it reads VIAPPMFISLLFGILDGIKAS. Over 391–404 the chain is Periplasmic; the sequence is AFSDILPSWAQRLP. The helical transmembrane segment at 405-425 threads the bilayer; that stretch reads LAEQGLAWLMPTVVMVVLAII. Topologically, residues 426–439 are cytoplasmic; the sequence is WDRAAGRQVTSSAH.

Belongs to the branched chain amino acid transporter family.

It is found in the cell inner membrane. Liv-II branched chain amino acid transport system, which transports leucine, valine and isoleucine. The chain is Branched-chain amino acid permease BrnQ (brnQ) from Escherichia coli O157:H7.